A 283-amino-acid polypeptide reads, in one-letter code: Mau operon transcriptional activator (283 aa).

An HTH lysR-type domain is found at 1 to 58; that stretch reads MNWDDLRVVAAINRCGSFNRAAKMLNVEETTIARRLARLEGSLGCVLFQAVDGQRRPT. The H-T-H motif DNA-binding region spans 18-37; the sequence is FNRAAKMLNVEETTIARRLA.

Belongs to the LysR transcriptional regulatory family.

Functionally, transcriptional activator of the mau genes involved in methylamine metabolism. This is Mau operon transcriptional activator (mauR) from Paracoccus denitrificans.